The primary structure comprises 158 residues: uncharacterized protein (158 aa).

Residues 1–18 (MDLASEITSATQTSSLCS) show a composition bias toward polar residues. Disordered regions lie at residues 1–20 (MDLASEITSATQTSSLCSSG), 66–94 (LRDLSRRGSTSSSRSPSRPVSTSASKPCL), and 111–158 (GSSG…GEEF). The segment covering 72–90 (RGSTSSSRSPSRPVSTSAS) has biased composition (low complexity). Polar residues-rich tracts occupy residues 111–120 (GSSGHLQSPG) and 149–158 (LSHSAQGEEF).

This is an uncharacterized protein from Homo sapiens (Human).